Consider the following 84-residue polypeptide: Putative membrane protein insertion efficiency factor (84 aa).

The protein belongs to the UPF0161 family.

The protein localises to the cell inner membrane. Could be involved in insertion of integral membrane proteins into the membrane. This is Putative membrane protein insertion efficiency factor from Shewanella denitrificans (strain OS217 / ATCC BAA-1090 / DSM 15013).